We begin with the raw amino-acid sequence, 362 residues long: L-asparaginase 2-1 (362 aa).

An N-terminal signal peptide occupies residues 1 to 25 (MRSLNTLLLSLFVAMSSGAPLLKIR). N29 carries an N-linked (GlcNAc...) asparagine glycan. Positions 33 to 359 (PSIKIFGTGG…DQIRSVFSGV (327 aa)) constitute an Asparaginase/glutaminase domain. T43 acts as the O-isoaspartyl threonine intermediate in catalysis. S89 lines the substrate pocket. N93 carries N-linked (GlcNAc...) asparagine glycosylation. Residue 122–123 (TD) participates in substrate binding. N-linked (GlcNAc...) asparagine glycosylation occurs at N239.

It belongs to the asparaginase 1 family.

The protein localises to the secreted. It is found in the periplasm. It carries out the reaction L-asparagine + H2O = L-aspartate + NH4(+). In Saccharomyces cerevisiae (strain ATCC 204508 / S288c) (Baker's yeast), this protein is L-asparaginase 2-1 (ASP3-1).